The sequence spans 329 residues: MSEAPAPVVTFKKGPSRRPAQSRQRRRSPSPLDPVAEASASASGSNVVRPERKSLANPLVQGTKRRRTNANNEEEEDGVGGGLDEFDYAAEGGLTRKGDELATRANDWDLEDVDGQGQRDKKVRLDEDGEIVTDDGLYRGASAYLPTINKTRETLDKKMKSGPIKATSHVRTITLMDYQPDVCKDYKETGFCGYGDSCKFLHDRGDYLAGWQLDKLPEEGVREVEEEDEEEEVPFACLICRQPFTQPVVTKCGHYFCMGCAAKRFQKSPKCYACGAPTQGIFNIADKVIAKIEARNKARREAREERAEQTGGGGIEIGGGSDEEGSDEE.

The disordered stretch occupies residues 1 to 86 (MSEAPAPVVT…DGVGGGLDEF (86 aa)). The segment covering 72–86 (NEEEEDGVGGGLDEF) has biased composition (acidic residues). Residues 177–205 (DYQPDVCKDYKETGFCGYGDSCKFLHDRG) form a C3H1-type zinc finger. The RING-type zinc-finger motif lies at 237 to 275 (CLICRQPFTQPVVTKCGHYFCMGCAAKRFQKSPKCYACG). Positions 298-308 (ARREAREERAE) are enriched in basic and acidic residues. A disordered region spans residues 298–329 (ARREAREERAEQTGGGGIEIGGGSDEEGSDEE). Over residues 310 to 320 (TGGGGIEIGGG) the composition is skewed to gly residues.

Belongs to the CWC24 family. Associated with the spliceosome.

The protein resides in the nucleus. Functionally, involved in pre-mRNA splicing. This is Pre-mRNA-splicing factor CWC24 (CWC24) from Cryptococcus neoformans var. neoformans serotype D (strain B-3501A) (Filobasidiella neoformans).